A 293-amino-acid chain; its full sequence is Ribosomal protein L11 methyltransferase (293 aa).

T145, G166, D188, and N230 together coordinate S-adenosyl-L-methionine.

Belongs to the methyltransferase superfamily. PrmA family.

It is found in the cytoplasm. The enzyme catalyses L-lysyl-[protein] + 3 S-adenosyl-L-methionine = N(6),N(6),N(6)-trimethyl-L-lysyl-[protein] + 3 S-adenosyl-L-homocysteine + 3 H(+). Its function is as follows. Methylates ribosomal protein L11. The polypeptide is Ribosomal protein L11 methyltransferase (Actinobacillus pleuropneumoniae serotype 3 (strain JL03)).